The chain runs to 140 residues: 3-hydroxyacyl-[acyl-carrier-protein] dehydratase FabZ (140 aa).

Histidine 47 is an active-site residue.

This sequence belongs to the thioester dehydratase family. FabZ subfamily.

The protein resides in the cytoplasm. The enzyme catalyses a (3R)-hydroxyacyl-[ACP] = a (2E)-enoyl-[ACP] + H2O. Functionally, involved in unsaturated fatty acids biosynthesis. Catalyzes the dehydration of short chain beta-hydroxyacyl-ACPs and long chain saturated and unsaturated beta-hydroxyacyl-ACPs. The chain is 3-hydroxyacyl-[acyl-carrier-protein] dehydratase FabZ from Streptococcus agalactiae serotype III (strain NEM316).